The chain runs to 87 residues: Small ribosomal subunit protein bS20 (87 aa).

A disordered region spans residues 1–26 (MANIKSAQKRAVQSEKRRQHNASQRS).

This sequence belongs to the bacterial ribosomal protein bS20 family.

Its function is as follows. Binds directly to 16S ribosomal RNA. The protein is Small ribosomal subunit protein bS20 of Glaesserella parasuis serovar 5 (strain SH0165) (Haemophilus parasuis).